The following is a 155-amino-acid chain: Xanthine-guanine phosphoribosyltransferase (155 aa).

Residues 37–38, Arg-69, and 90–98 contribute to the 5-phospho-alpha-D-ribose 1-diphosphate site; these read RG and EDLVDTGTT. Arg-69 contributes to the GMP binding site. Residue Asp-91 coordinates Mg(2+). Residues Asp-94 and Ile-137 each contribute to the guanine site. The xanthine site is built by Asp-94 and Ile-137. Residues 94 to 98 and 136 to 137 contribute to the GMP site; these read DTGTT and WI.

The protein belongs to the purine/pyrimidine phosphoribosyltransferase family. XGPT subfamily. As to quaternary structure, homotetramer. The cofactor is Mg(2+).

The protein resides in the cell inner membrane. It carries out the reaction GMP + diphosphate = guanine + 5-phospho-alpha-D-ribose 1-diphosphate. The enzyme catalyses XMP + diphosphate = xanthine + 5-phospho-alpha-D-ribose 1-diphosphate. It catalyses the reaction IMP + diphosphate = hypoxanthine + 5-phospho-alpha-D-ribose 1-diphosphate. The protein operates within purine metabolism; GMP biosynthesis via salvage pathway; GMP from guanine: step 1/1. It participates in purine metabolism; XMP biosynthesis via salvage pathway; XMP from xanthine: step 1/1. Its function is as follows. Purine salvage pathway enzyme that catalyzes the transfer of the ribosyl-5-phosphate group from 5-phospho-alpha-D-ribose 1-diphosphate (PRPP) to the N9 position of the 6-oxopurines guanine and xanthine to form the corresponding ribonucleotides GMP (guanosine 5'-monophosphate) and XMP (xanthosine 5'-monophosphate), with the release of PPi. To a lesser extent, also acts on hypoxanthine. The protein is Xanthine-guanine phosphoribosyltransferase of Aeromonas hydrophila subsp. hydrophila (strain ATCC 7966 / DSM 30187 / BCRC 13018 / CCUG 14551 / JCM 1027 / KCTC 2358 / NCIMB 9240 / NCTC 8049).